The chain runs to 1237 residues: ATP-dependent RNA helicase DEAH13 (1237 aa).

Disordered regions lie at residues 1–51 (MASV…NSNV) and 115–148 (AMQL…EPTT). Positions 24–38 (SNKMQDKLNSNNNTG) are enriched in polar residues. Positions 131 to 143 (SVEQNDNDDDSCM) are enriched in acidic residues. Residues 251–443 (MEAINRHPAV…KRLFPNIPPL (193 aa)) form the Helicase ATP-binding domain. Position 264–271 (264–271 (GQTGCGKT)) interacts with ATP. Residues 367-370 (DEAH) carry the DEAH box motif. The disordered stretch occupies residues 543-585 (DDDSNNQNSRFSSHGEDPSDIGDGNYDDDFEEEDMYESDEDRD). Positions 567-585 (NYDDDFEEEDMYESDEDRD) are enriched in acidic residues. The region spanning 605–776 (ALRAAFNALA…GVILLMKSMN (172 aa)) is the Helicase C-terminal domain. The tract at residues 876–910 (EKKNESKDADKTVKQEDKQRKKDRKEKIKAARDRF) is disordered.

This sequence belongs to the DEAD box helicase family. DEAH subfamily.

It catalyses the reaction ATP + H2O = ADP + phosphate + H(+). The sequence is that of ATP-dependent RNA helicase DEAH13 from Arabidopsis thaliana (Mouse-ear cress).